Here is a 438-residue protein sequence, read N- to C-terminus: Putative cytochrome P450 140 (438 aa).

Residue cysteine 381 coordinates heme.

This sequence belongs to the cytochrome P450 family. The cofactor is heme.

In Mycobacterium bovis (strain ATCC BAA-935 / AF2122/97), this protein is Putative cytochrome P450 140 (cyp140).